Reading from the N-terminus, the 294-residue chain is 33 kDa chaperonin (294 aa).

2 disulfides stabilise this stretch: Cys-239–Cys-241 and Cys-272–Cys-275.

Belongs to the HSP33 family. Under oxidizing conditions two disulfide bonds are formed involving the reactive cysteines. Under reducing conditions zinc is bound to the reactive cysteines and the protein is inactive.

The protein localises to the cytoplasm. In terms of biological role, redox regulated molecular chaperone. Protects both thermally unfolding and oxidatively damaged proteins from irreversible aggregation. Plays an important role in the bacterial defense system toward oxidative stress. This chain is 33 kDa chaperonin, found in Listeria monocytogenes serotype 4a (strain HCC23).